A 115-amino-acid chain; its full sequence is Regulator of ribonuclease activity B (115 aa).

Belongs to the RraB family. Interacts with the C-terminal region of Rne.

It localises to the cytoplasm. Its function is as follows. Globally modulates RNA abundance by binding to RNase E (Rne) and regulating its endonucleolytic activity. Can modulate Rne action in a substrate-dependent manner by altering the composition of the degradosome. This is Regulator of ribonuclease activity B from Aeromonas salmonicida (strain A449).